Reading from the N-terminus, the 435-residue chain is Diguanylate cyclase TpbB (435 aa).

Over 1–22 (MNRRRRYTGSNPSLRRVLYRAH) the chain is Cytoplasmic. A helical transmembrane segment spans residues 23–43 (LGVALVAVFTAGLAVTLVGLL). Over 44-154 (TLRAYADPNQ…VKGSGGSLLR (111 aa)) the chain is Periplasmic. A helical transmembrane segment spans residues 155-175 (FLLTGFAGMVLCLLLTALGAF). At 176-435 (YLSRRLVRGI…DSATPEAPPK (260 aa)) the chain is on the cytoplasmic side. One can recognise an HAMP domain in the interval 183-236 (RGIVGPLDQLAKVAHTVRRERDFEKRVPEAGIAELSQLGEDFNALLDELESWQA). Residues 279 to 415 (EQLAVLFIDS…GSRRLAELND (137 aa)) form the GGDEF domain. Positions 288 and 330 each coordinate Mg(2+). The active-site Proton acceptor is the aspartate 330. The segment covering 414-426 (NDPRILQEEKEID) has biased composition (basic and acidic residues). The interval 414 to 435 (NDPRILQEEKEIDSATPEAPPK) is disordered.

It depends on Mg(2+) as a cofactor. Post-translationally, phosphorylated at both Tyr residues and Ser/Thr residues. Dephosphorylated and inactivated by TpbA.

It is found in the cell inner membrane. It catalyses the reaction 2 GTP = 3',3'-c-di-GMP + 2 diphosphate. It participates in purine metabolism; 3',5'-cyclic di-GMP biosynthesis. Its activity is regulated as follows. Activity is tightly controlled by YfiR, a small periplasmic protein, and the OmpA/Pal-like outer-membrane lipoprotein YfiB. Diguanylate cyclase activity is inhibited by the specific interaction of YfiR with the TpbB periplasmic domain and is activated by YfiB, which releases the YfiR-mediated repression through sequestration of YfiR to the outer membrane. Activity is also controlled by dephosphorylation of the periplasmic domain by the tyrosine phosphatase TpbA. In terms of biological role, catalyzes the synthesis of cyclic-di-GMP (c-di-GMP) via the condensation of 2 GTP molecules. Important for the regulation of biofilm maintenance when exposed to peroxide. Its function is as follows. Part of the YfiB-TpbB-YfiR (or yfiBNR) system, encoding a tripartite signaling module that modulates intracellular c-di-GMP levels. The system is a key regulator of the small colony variant (SCV) phenotype, and plays an important role in biofilm formation and in vivo persistence. The c-di-GMP produced by TpbB/YfiN stimulates the production of the Pel and Psl exopolysaccharides, which promotes surface attachment, generates an SCV phenotype and confers resistance against phagocytosis. This is Diguanylate cyclase TpbB from Pseudomonas aeruginosa (strain UCBPP-PA14).